The following is a 676-amino-acid chain: RNA helicase NPH-II (676 aa).

Residues 172 to 347 (FSAWISHRPV…VFLPNPAFIH (176 aa)) enclose the Helicase ATP-binding domain. 185 to 192 (GGTGVGKT) serves as a coordination point for ATP. The short motif at 296 to 299 (DEVH) is the DEXH box element. The region spanning 366–535 (NPSSRMAYIE…NYILYANKFN (170 aa)) is the Helicase C-terminal domain.

This sequence belongs to the DEAD box helicase family. DEAH subfamily. As to quaternary structure, monomer.

The protein localises to the virion. The enzyme catalyses ATP + H2O = ADP + phosphate + H(+). Its function is as follows. NTP-dependent helicase that catalyzes unidirectional unwinding of 3'tailed duplex RNAs and plays an important role during transcription of early mRNAs, presumably by preventing R-loop formation behind the elongating RNA polymerase. Might also play a role in the export of newly synthesized mRNA chains out of the core into the cytoplasm. Required for replication and propagation of viral particles. This Bos taurus (Bovine) protein is RNA helicase NPH-II (OPG084).